The chain runs to 595 residues: Putative histone-lysine N-methyltransferase PRDM6 (595 aa).

The tract at residues 27 to 90 is disordered; the sequence is FPHGGAGPLK…STPASSSTSA (64 aa). The span at 30 to 40 shows a compositional bias: gly residues; it reads GGAGPLKGSGA. Residues 49–59 show a composition bias toward pro residues; that stretch reads PLQPPPPPPPP. Residues 71–90 show a composition bias toward low complexity; it reads PRPASLSSASSTPASSSTSA. The region spanning 246–365 is the SET domain; it reads REVCLCTSTV…RGTELLVWYN (120 aa). A C2H2-type 1; degenerate zinc finger spans residues 473–495; that stretch reads WKCGQCFKTFTQRILLQMHVCTQ. 2 consecutive C2H2-type zinc fingers follow at residues 501-523 and 529-551; these read YQCG…VVTH and FKCG…IRTH. Residues 557–579 form a C2H2-type 4; degenerate zinc finger; the sequence is FKCERCERSFTQATQLSRHQRMP.

The protein belongs to the class V-like SAM-binding methyltransferase superfamily. In terms of assembly, interacts with HDAC1, HDAC2, HDAC3, CBX1 and EP300.

Its subcellular location is the nucleus. It carries out the reaction L-lysyl(20)-[histone H4] + S-adenosyl-L-methionine = N(6)-methyl-L-lysyl(20)-[histone H4] + S-adenosyl-L-homocysteine + H(+). Its function is as follows. Putative histone methyltransferase that acts as a transcriptional repressor of smooth muscle gene expression. Promotes the transition from differentiated to proliferative smooth muscle by suppressing differentiation and maintaining the proliferative potential of vascular smooth muscle cells. Also plays a role in endothelial cells by inhibiting endothelial cell proliferation, survival and differentiation. It is unclear whether it has histone methyltransferase activity in vivo. According to some authors, it does not act as a histone methyltransferase by itself and represses transcription by recruiting EHMT2/G9a. According to others, it possesses histone methyltransferase activity when associated with other proteins and specifically methylates 'Lys-20' of histone H4 in vitro. 'Lys-20' methylation represents a specific tag for epigenetic transcriptional repression. The polypeptide is Putative histone-lysine N-methyltransferase PRDM6 (PRDM6) (Homo sapiens (Human)).